The sequence spans 770 residues: MASLKVFLAVYLLGGITFLPLVLFTLYKIHLLYSNLKSASKKELDHDTADEIDEKTRLLARDIDPEFKARKLEEQLGVKVFNKGWITVTKQYYYHSSEVAVILKNSNNNKDSDTALQEQILQRTDLKKKQRFFAVLRHGNLFLYKDDSQNANLVHAISLQNRFITIWPRFDELGKEELPDASLFTKRTCIAIFKNDLVSIDSKNHNVILPHFDPLTSAESNNGDISTNDTTHEYQSQFHSSNQFFLYFDNNMDKEDWYYQLINASKNSNSLSTGLLDPNVSANAAHLKTKDMLQLIQDINSTENQLTTKWLNALLGRLFLSLQQTDTLNKFIHEKICKKLNKIKTPGFLDDLVVEKVDVGDSAPLFTSPELLELSPEGSTKIAIDVQYRGNLTIIIATKASINLGSRFKQREVSLQLSIKIKEFSGPLLFLIKPPPSNRIWYAFRTEPIMDFEIEPIVSSSKLSYNVVTNAIKSKFAEAVKESLVVPFMDDIVFYPTPNEVYRGGIWEEQDPEAAARARTAAAASDMNNTSAKEHLEALQEGGMKTQSRIKKALRPERKKENLKDLVDASGVATKTTTQTTVTTATNDDVSSSENSTKSRKYFKNSIKKIGRWYKDNVGNSSDTEDMDEIDVQDKKNDDSADERESDNPILTSNPKMISNRRPVPRRPSQPLNTLSPKLEGRKEKDTENFPVPPSASNMNASKMFANKENRKFSVSSNDSQNSLKNGDPHVKASKLESSQAFVKKTSQNRFNDGFFKQDLEFEEQREPKL.

Topologically, residues 1–5 are cytoplasmic; sequence MASLK. A helical; Signal-anchor for type II membrane protein transmembrane segment spans residues 6 to 26; that stretch reads VFLAVYLLGGITFLPLVLFTL. Residues 27–770 are Lumenal-facing; the sequence is YKIHLLYSNL…EFEEQREPKL (744 aa). The region spanning 114–266 is the PH domain; the sequence is TALQEQILQR…WYYQLINASK (153 aa). N-linked (GlcNAc...) asparagine glycosylation is found at Asn228, Asn263, Asn279, Asn300, Asn391, Asn528, and Asn529. Positions 304–504 constitute an SMP-LTD domain; sequence NQLTTKWLNA…YPTPNEVYRG (201 aa). Disordered stretches follow at residues 541-566, 578-600, and 615-770; these read EGGMKTQSRIKKALRPERKKENLKDL, TQTTVTTATNDDVSSSENSTKSR, and KDNV…EPKL. A compositionally biased stretch (basic and acidic residues) spans 554–566; that stretch reads LRPERKKENLKDL. Over residues 587-596 the composition is skewed to polar residues; it reads NDDVSSSENS. Residues Asn595 and Asn620 are each glycosylated (N-linked (GlcNAc...) asparagine). 2 positions are modified to phosphoserine: Ser640 and Ser669. The span at 679–688 shows a compositional bias: basic and acidic residues; the sequence is LEGRKEKDTE. Asn700 carries N-linked (GlcNAc...) asparagine glycosylation. 2 stretches are compositionally biased toward polar residues: residues 713 to 725 and 736 to 751; these read FSVSSNDSQNSLK and LESSQAFVKKTSQNRF. At Ser717 the chain carries Phosphoserine. N-linked (GlcNAc...) asparagine glycosylation occurs at Asn718. Phosphoserine is present on residues Ser720 and Ser723. The segment covering 756-770 has biased composition (basic and acidic residues); that stretch reads FKQDLEFEEQREPKL.

Its subcellular location is the endoplasmic reticulum membrane. It localises to the nucleus membrane. Functionally, during endoplasmic reticulum (ER) stress or when cellular ceramide levels increase, induces contacts between the ER and medial-Golgi complex to facilitate non-vesicular transport of ceramides from the ER to the Golgi complex where they are converted to complex sphingolipids, preventing toxic ceramide accumulation. The protein is Nucleus-vacuole junction protein 2 of Saccharomyces cerevisiae (strain ATCC 204508 / S288c) (Baker's yeast).